Consider the following 501-residue polypeptide: Aspartate--tRNA ligase, cytoplasmic (501 aa).

Thr-52 is subject to Phosphothreonine. At Lys-74 the chain carries N6-acetyllysine. Glu-229 contributes to the L-aspartate binding site. Ser-249 carries the post-translational modification Phosphoserine. Residues 251-254 (QLYK) form an aspartate region. Arg-273 lines the L-aspartate pocket. ATP is bound by residues 273 to 275 (RAE) and 281 to 283 (RHL). At Lys-374 the chain carries N6-acetyllysine. The tract at residues 411–415 (KQSNS) is binding site for the 3'-end of tRNA. Glu-424 provides a ligand contact to ATP. L-aspartate is bound by residues Ser-427 and Arg-431. 472 to 475 (GLER) is a binding site for ATP. Thr-500 carries the phosphothreonine; by PKA modification.

It belongs to the class-II aminoacyl-tRNA synthetase family. Type 2 subfamily. In terms of assembly, homodimer. Part of a multisubunit complex that groups tRNA ligases for Arg (RARS1), Asp (DARS1), Gln (QARS1), Ile (IARS1), Leu (LARS1), Lys (KARS1), Met (MARS1) the bifunctional ligase for Glu and Pro (EPRS1) and the auxiliary subunits AIMP1/p43, AIMP2/p38 and EEF1E1/p18.

Its subcellular location is the cytoplasm. It catalyses the reaction tRNA(Asp) + L-aspartate + ATP = L-aspartyl-tRNA(Asp) + AMP + diphosphate. In terms of biological role, catalyzes the specific attachment of an amino acid to its cognate tRNA in a 2 step reaction: the amino acid (AA) is first activated by ATP to form AA-AMP and then transferred to the acceptor end of the tRNA. This is Aspartate--tRNA ligase, cytoplasmic (DARS1) from Bos taurus (Bovine).